A 180-amino-acid polypeptide reads, in one-letter code: ATP synthase subunit b (180 aa).

Residues 15–35 (LIPEVPELVIGLLAFAIVFFV) form a helical membrane-spanning segment.

This sequence belongs to the ATPase B chain family. In terms of assembly, F-type ATPases have 2 components, F(1) - the catalytic core - and F(0) - the membrane proton channel. F(1) has five subunits: alpha(3), beta(3), gamma(1), delta(1), epsilon(1). F(0) has three main subunits: a(1), b(2) and c(10-14). The alpha and beta chains form an alternating ring which encloses part of the gamma chain. F(1) is attached to F(0) by a central stalk formed by the gamma and epsilon chains, while a peripheral stalk is formed by the delta and b chains.

It localises to the cell membrane. In terms of biological role, f(1)F(0) ATP synthase produces ATP from ADP in the presence of a proton or sodium gradient. F-type ATPases consist of two structural domains, F(1) containing the extramembraneous catalytic core and F(0) containing the membrane proton channel, linked together by a central stalk and a peripheral stalk. During catalysis, ATP synthesis in the catalytic domain of F(1) is coupled via a rotary mechanism of the central stalk subunits to proton translocation. Component of the F(0) channel, it forms part of the peripheral stalk, linking F(1) to F(0). The sequence is that of ATP synthase subunit b from Streptomyces avermitilis (strain ATCC 31267 / DSM 46492 / JCM 5070 / NBRC 14893 / NCIMB 12804 / NRRL 8165 / MA-4680).